Reading from the N-terminus, the 396-residue chain is MYIKVLSVTDINNYIKNTMDNDFILNNASIRGEISNFKIHSSGHVYFSMKDQWSKINCVMFRSAAKGLKFLPEDGMKIIANGRISAYVKDGSYQLYCDKLELEGLGELYIAFEKLKNKLEKEGLFKEECKKSLPQYAKKIGVITSETGAAIRDIINVATRRNKNCEILIYPSLVQGTNASSDIIKGIKELNKVKDLDVIILARGGGSIEELWVFNDEELAREIFKSKVPIITGVGHETDFTIADFVSDKRAPTPSAAAEIAIKDLQELNSRLENYKNALNYYVLNNLKEKYNKLDRLKLSMEGNSPERIIINEYNKIDFIINKLNSYIKIEVDKRKEELSRMSILLSSNNPLNILNKGYSVIQDGTGKVINTIKELDKEKKVTINLKDGKKEYQIQ.

The protein belongs to the XseA family. Heterooligomer composed of large and small subunits.

It localises to the cytoplasm. The catalysed reaction is Exonucleolytic cleavage in either 5'- to 3'- or 3'- to 5'-direction to yield nucleoside 5'-phosphates.. Its function is as follows. Bidirectionally degrades single-stranded DNA into large acid-insoluble oligonucleotides, which are then degraded further into small acid-soluble oligonucleotides. The protein is Exodeoxyribonuclease 7 large subunit of Clostridium tetani (strain Massachusetts / E88).